A 295-amino-acid chain; its full sequence is Protease HtpX (295 aa).

The next 2 helical transmembrane spans lie at 4–24 (ILLF…TLSL) and 42–62 (QLLV…LFIS). Residue His-147 coordinates Zn(2+). Glu-148 is an active-site residue. His-151 is a binding site for Zn(2+). The next 2 helical transmembrane spans lie at 158–178 (VTLA…ARII) and 199–219 (ITTI…VMWF). Glu-224 contacts Zn(2+).

The protein belongs to the peptidase M48B family. Zn(2+) serves as cofactor.

It localises to the cell inner membrane. The sequence is that of Protease HtpX from Pseudomonas syringae pv. tomato (strain ATCC BAA-871 / DC3000).